The primary structure comprises 426 residues: Protein TolB homolog (426 aa).

Positions 1-19 (MFLRSFLCLLCLLPSILYC) are cleaved as a signal peptide.

The protein belongs to the TolB family.

It is found in the periplasm. The sequence is that of Protein TolB homolog from Chlamydia muridarum (strain MoPn / Nigg).